A 243-amino-acid polypeptide reads, in one-letter code: Ubiquinone/menaquinone biosynthesis C-methyltransferase UbiE (243 aa).

S-adenosyl-L-methionine-binding positions include T69, D90, and 116 to 117; that span reads DA.

The protein belongs to the class I-like SAM-binding methyltransferase superfamily. MenG/UbiE family.

It catalyses the reaction a 2-demethylmenaquinol + S-adenosyl-L-methionine = a menaquinol + S-adenosyl-L-homocysteine + H(+). The catalysed reaction is a 2-methoxy-6-(all-trans-polyprenyl)benzene-1,4-diol + S-adenosyl-L-methionine = a 5-methoxy-2-methyl-3-(all-trans-polyprenyl)benzene-1,4-diol + S-adenosyl-L-homocysteine + H(+). Its pathway is quinol/quinone metabolism; menaquinone biosynthesis; menaquinol from 1,4-dihydroxy-2-naphthoate: step 2/2. It functions in the pathway cofactor biosynthesis; ubiquinone biosynthesis. In terms of biological role, methyltransferase required for the conversion of demethylmenaquinol (DMKH2) to menaquinol (MKH2) and the conversion of 2-polyprenyl-6-methoxy-1,4-benzoquinol (DDMQH2) to 2-polyprenyl-3-methyl-6-methoxy-1,4-benzoquinol (DMQH2). The polypeptide is Ubiquinone/menaquinone biosynthesis C-methyltransferase UbiE (Cupriavidus pinatubonensis (strain JMP 134 / LMG 1197) (Cupriavidus necator (strain JMP 134))).